The chain runs to 945 residues: Splicing factor, suppressor of white-apricot homolog (945 aa).

Disordered stretches follow at residues methionine 1–threonine 28 and tyrosine 157–alanine 190. 2 stretches are compositionally biased toward basic and acidic residues: residues alanine 9–alanine 21 and proline 169–alanine 178. The stretch at isoleucine 211–tyrosine 253 is one SURP motif 1 repeat. Positions alanine 269–histidine 298 are disordered. At serine 283 the chain carries Phosphoserine. Residues aspartate 284–glycine 294 show a composition bias toward acidic residues. Position 315 is an N6-acetyllysine (lysine 315). Disordered stretches follow at residues lysine 332–valine 355 and serine 403–threonine 438. Positions alanine 335 to proline 352 are enriched in low complexity. Pro residues predominate over residues valine 412–threonine 425. Low complexity predominate over residues threonine 426–threonine 438. Residues valine 458 to tyrosine 498 form an SURP motif 2 repeat. 3 disordered regions span residues glycine 512–glycine 566, proline 589–arginine 680, and glycine 714–lysine 921. Over residues threonine 514 to threonine 527 the composition is skewed to low complexity. Residues alanine 528–alanine 540 are compositionally biased toward acidic residues. The segment covering proline 589 to aspartate 598 has biased composition (basic and acidic residues). Serine 601 and serine 621 each carry phosphoserine. Residues serine 615–valine 630 show a composition bias toward low complexity. Residues glutamate 632–leucine 686 adopt a coiled-coil conformation. Threonine 639 carries the post-translational modification Phosphothreonine. 2 stretches are compositionally biased toward basic and acidic residues: residues leucine 643 to glutamate 679 and lysine 733 to glutamate 752. Composition is skewed to basic residues over residues lysine 753–histidine 787 and threonine 795–alanine 810. The segment covering histidine 811 to serine 821 has biased composition (basic and acidic residues). Phosphoserine is present on residues serine 829 and serine 831. Residues serine 835–alanine 861 show a composition bias toward basic residues. The segment covering glutamine 871–serine 894 has biased composition (low complexity). The span at serine 895 to glycine 908 shows a compositional bias: basic and acidic residues. A phosphoserine mark is found at serine 899 and serine 903. The span at glutamine 909–serine 920 shows a compositional bias: low complexity.

It is found in the nucleus. Plays a role as an alternative splicing regulator. Regulate its own expression at the level of RNA processing. Also regulates the splicing of fibronectin and CD45 genes. May act, at least in part, by interaction with other R/S-containing splicing factors. Represses the splicing of MAPT/Tau exon 10. This is Splicing factor, suppressor of white-apricot homolog (Sfswap) from Rattus norvegicus (Rat).